We begin with the raw amino-acid sequence, 1446 residues long: Sister chromatid cohesion protein PDS5 homolog B (1446 aa).

Residues 383–419 form an HEAT repeat; it reads LLVNDHLLNFVRERTLDKRWRVRKEAMMGLAQIYKKY. Position 1136 is an N6-acetyllysine (K1136). The span at 1137 to 1155 shows a compositional bias: polar residues; that stretch reads PLSSAGKQSQTKSSRMETV. A disordered region spans residues 1137-1446; it reads PLSSAGKQSQ…RRRSSKRERR (310 aa). Phosphoserine is present on residues S1140, S1162, S1166, S1176, S1182, and S1191. The segment covering 1156–1167 has biased composition (low complexity); sequence SNASSSSNPSSP. Over residues 1172–1184 the composition is skewed to basic and acidic residues; the sequence is GRLDSSEMDHSEN. Basic and acidic residues-rich tracts occupy residues 1196 to 1212 and 1223 to 1241; these read KKSD…LEKP and PEEK…EQKP. The segment covering 1243 to 1252 has biased composition (basic residues); sequence GSQRGRKRGR. Residues 1247 to 1259 constitute a DNA-binding region (a.T hook 1); that stretch reads GRKRGRTASDSDE. Position 1253 is a phosphothreonine (T1253). Residues S1255 and S1257 each carry the phosphoserine modification. The segment covering 1263–1272 has biased composition (basic and acidic residues); it reads PEEKRHKEEL. A Phosphoserine modification is found at S1281. The a.T hook 2 DNA-binding region spans 1285 to 1297; the sequence is KGKRGRPPKPLGG. Composition is skewed to basic residues over residues 1308–1317 and 1339–1351; these read TSKKGNKKKL and SKSK…KRAQ. Residues 1353–1370 are compositionally biased toward polar residues; the sequence is RAESPETSAVESTQSTPQ. Phosphoserine occurs at positions 1356 and 1364. T1365 bears the Phosphothreonine mark. At S1367 the chain carries Phosphoserine. T1368 bears the Phosphothreonine mark. Residues 1370–1382 constitute a DNA-binding region (a.T hook 3); sequence QKGRGRPSKAPSP. Phosphoserine occurs at positions 1381, 1415, and 1418. Residues 1421–1431 show a composition bias toward acidic residues; sequence TTQEGAEEEDI. Residues 1436-1446 show a composition bias toward basic residues; that stretch reads VRRRSSKRERR.

Belongs to the PDS5 family. In terms of assembly, interacts with the cohesin complex. Interacts with RAD21; the interaction is direct. Interacts with WAPL (via FGF motifs) or CDCA5 (via the FGF motif); the interaction is direct, cohesin-dependent and competitive. Expressed in prostate.

Its subcellular location is the nucleus. Regulator of sister chromatid cohesion in mitosis which may stabilize cohesin complex association with chromatin. May couple sister chromatid cohesion during mitosis to DNA replication. Cohesion ensures that chromosome partitioning is accurate in both meiotic and mitotic cells and plays an important role in DNA repair. Plays a role in androgen-induced proliferative arrest in prostate cells. The chain is Sister chromatid cohesion protein PDS5 homolog B (Pds5b) from Mus musculus (Mouse).